Reading from the N-terminus, the 423-residue chain is MAIELNQIWDFPIKEFHPFPRALLGVGAHDIIGVEAKNLGFKRTLLMTTGLRGSGIIEELTGKIEYQGVEVVLYDKVESNPKDYNVMEAAALYQQERCDSIISIGGGSSHDAAKGARVVIAHDGRNINEFEGFAKSTNKQNPPHIAVSTTAGTGSETSWAYVITDTSDMEHPHKWVGFDEATIVTLAIDDPLLYYTCPQHFTAYCGFDVLAHGSEPYVSRLDFAPSLGNALYSVELVAKHLREAVFEPRNLKAREGMMNAQYIAGQAFNSGGLGIVHSISHAVSAFFDSHHGLNNAIALPRVWEYNLPSRYERYAQLATAMGVDTRNMTTVQAADAAVEAAIRLSQDVGIPDNFSQVRVDSYDKNRMNTGKYAGKGEVIKGDDKSVLAISEHIQGDWCTPGNPREVTVDSMIPVVGHAINGTY.

It belongs to the iron-containing alcohol dehydrogenase family. In terms of assembly, homodecamer. It depends on Mg(2+) as a cofactor. The cofactor is Zn(2+). Requires NADPH as cofactor.

The catalysed reaction is methanol + A = formaldehyde + AH2. Its function is as follows. Catalyzes the oxidation of methanol to yield formaldehyde. While the in vivo electron acceptor is not known, N,N-dimethyl-4-nitrosoaniline (NDMA) can serve this function in vitro and is reduced to 4-(hydroxylamino)-N,N-dimethylaniline. It is also able to use ethanol and formaldehyde with an activity comparable to methanol, and has a weak activity with methylamine as substrate. The chain is Methanol:N,N-dimethyl-4-nitrosoaniline oxidoreductase from Mycobacterium sp. (strain DSM 3803 / JC1).